Here is a 399-residue protein sequence, read N- to C-terminus: Elongation factor Tu (399 aa).

Positions 10–204 (KPHVNIGTIG…AVDASIPEPE (195 aa)) constitute a tr-type G domain. Residues 19-26 (GHVDHGKT) form a G1 region. 19–26 (GHVDHGKT) serves as a coordination point for GTP. Threonine 26 is a binding site for Mg(2+). Residues 60-64 (GITIN) are G2. Residues 81–84 (DCPG) form a G3 region. GTP-binding positions include 81 to 85 (DCPGH) and 136 to 139 (NKCD). The G4 stretch occupies residues 136-139 (NKCD). Positions 174-176 (SGL) are G5.

Belongs to the TRAFAC class translation factor GTPase superfamily. Classic translation factor GTPase family. EF-Tu/EF-1A subfamily. Monomer.

Its subcellular location is the cytoplasm. It catalyses the reaction GTP + H2O = GDP + phosphate + H(+). GTP hydrolase that promotes the GTP-dependent binding of aminoacyl-tRNA to the A-site of ribosomes during protein biosynthesis. This Prochlorococcus marinus (strain MIT 9515) protein is Elongation factor Tu.